Reading from the N-terminus, the 118-residue chain is DNA-directed RNA polymerase subunit omega (118 aa).

The protein belongs to the RNA polymerase subunit omega family. In terms of assembly, the RNAP catalytic core consists of 2 alpha, 1 beta, 1 beta' and 1 omega subunit. When a sigma factor is associated with the core the holoenzyme is formed, which can initiate transcription.

It carries out the reaction RNA(n) + a ribonucleoside 5'-triphosphate = RNA(n+1) + diphosphate. In terms of biological role, promotes RNA polymerase assembly. Latches the N- and C-terminal regions of the beta' subunit thereby facilitating its interaction with the beta and alpha subunits. The polypeptide is DNA-directed RNA polymerase subunit omega (Paracoccus denitrificans (strain Pd 1222)).